Reading from the N-terminus, the 159-residue chain is 6,7-dimethyl-8-ribityllumazine synthase (159 aa).

5-amino-6-(D-ribitylamino)uracil-binding positions include tryptophan 26, 58 to 60 (AIE), and 80 to 82 (VVI). 85–86 (ET) contacts (2S)-2-hydroxy-3-oxobutyl phosphate. Histidine 88 acts as the Proton donor in catalysis. Asparagine 113 provides a ligand contact to 5-amino-6-(D-ribitylamino)uracil. Arginine 127 lines the (2S)-2-hydroxy-3-oxobutyl phosphate pocket.

This sequence belongs to the DMRL synthase family. Homopentamer.

It carries out the reaction (2S)-2-hydroxy-3-oxobutyl phosphate + 5-amino-6-(D-ribitylamino)uracil = 6,7-dimethyl-8-(1-D-ribityl)lumazine + phosphate + 2 H2O + H(+). The protein operates within cofactor biosynthesis; riboflavin biosynthesis; riboflavin from 2-hydroxy-3-oxobutyl phosphate and 5-amino-6-(D-ribitylamino)uracil: step 1/2. Catalyzes the formation of 6,7-dimethyl-8-ribityllumazine by condensation of 5-amino-6-(D-ribitylamino)uracil with 3,4-dihydroxy-2-butanone 4-phosphate. This is the penultimate step in the biosynthesis of riboflavin. This chain is 6,7-dimethyl-8-ribityllumazine synthase, found in Mycolicibacterium gilvum (strain PYR-GCK) (Mycobacterium gilvum (strain PYR-GCK)).